The following is a 277-amino-acid chain: 3-methyl-2-oxobutanoate hydroxymethyltransferase (277 aa).

Mg(2+) is bound by residues aspartate 54 and aspartate 93. 3-methyl-2-oxobutanoate-binding positions include 54-55, aspartate 93, and lysine 122; that span reads DS. Glutamate 124 lines the Mg(2+) pocket. The Proton acceptor role is filled by glutamate 191.

This sequence belongs to the PanB family. Homodecamer; pentamer of dimers. The cofactor is Mg(2+).

Its subcellular location is the cytoplasm. The catalysed reaction is 3-methyl-2-oxobutanoate + (6R)-5,10-methylene-5,6,7,8-tetrahydrofolate + H2O = 2-dehydropantoate + (6S)-5,6,7,8-tetrahydrofolate. It functions in the pathway cofactor biosynthesis; (R)-pantothenate biosynthesis; (R)-pantoate from 3-methyl-2-oxobutanoate: step 1/2. Its function is as follows. Catalyzes the reversible reaction in which hydroxymethyl group from 5,10-methylenetetrahydrofolate is transferred onto alpha-ketoisovalerate to form ketopantoate. The protein is 3-methyl-2-oxobutanoate hydroxymethyltransferase of Alkalilimnicola ehrlichii (strain ATCC BAA-1101 / DSM 17681 / MLHE-1).